A 336-amino-acid polypeptide reads, in one-letter code: MTTATAFEIRTLTPHPTLEYWSVCKIEALFETPFLDLVYRAAQVHRENFNPKAIQLSTLMSIKTGGCPEDCGYCPQSARYHTGVEKQQLLDVEEIVEKAKIAKARGAGRFCMGAAWRGPKPKDIEKVTAIIKAVKELGLETCGTFGLLQDGMAEDLKEAGLDYYNHNLDTAPEHYGNVIGTRQFDDRINTLGKVRKAGLKVCCGGIIGMNETRKERAGLIASLANLDPQPESVPINQLVKVEGTPLADAAELDWTEFVRTIAVARITMPKSYVRLSAGRQGMSEEMQAMCFMAGANSIFYGDKLLVTGNPEEDGDQRLMAKLDLEPETEENRYRAE.

In terms of domain architecture, Radical SAM core spans 52–279 (KAIQLSTLMS…KSYVRLSAGR (228 aa)). [4Fe-4S] cluster-binding residues include C67, C71, and C74. [2Fe-2S] cluster-binding residues include C111, C142, C202, and R274.

This sequence belongs to the radical SAM superfamily. Biotin synthase family. As to quaternary structure, homodimer. [4Fe-4S] cluster serves as cofactor. It depends on [2Fe-2S] cluster as a cofactor.

The catalysed reaction is (4R,5S)-dethiobiotin + (sulfur carrier)-SH + 2 reduced [2Fe-2S]-[ferredoxin] + 2 S-adenosyl-L-methionine = (sulfur carrier)-H + biotin + 2 5'-deoxyadenosine + 2 L-methionine + 2 oxidized [2Fe-2S]-[ferredoxin]. It participates in cofactor biosynthesis; biotin biosynthesis; biotin from 7,8-diaminononanoate: step 2/2. Its function is as follows. Catalyzes the conversion of dethiobiotin (DTB) to biotin by the insertion of a sulfur atom into dethiobiotin via a radical-based mechanism. The polypeptide is Biotin synthase (Pasteurella multocida (strain Pm70)).